A 175-amino-acid chain; its full sequence is NADH-ubiquinone oxidoreductase chain 6 (175 aa).

5 consecutive transmembrane segments (helical) span residues 1-21, 25-45, 47-67, 88-108, and 149-169; these read MMTY…VGFA, SPIY…AIVL, FGGS…MLVV, AVLA…CYIL, and YGTW…LVIM.

The protein belongs to the complex I subunit 6 family. As to quaternary structure, core subunit of respiratory chain NADH dehydrogenase (Complex I) which is composed of 45 different subunits.

It is found in the mitochondrion inner membrane. The enzyme catalyses a ubiquinone + NADH + 5 H(+)(in) = a ubiquinol + NAD(+) + 4 H(+)(out). Its function is as follows. Core subunit of the mitochondrial membrane respiratory chain NADH dehydrogenase (Complex I) which catalyzes electron transfer from NADH through the respiratory chain, using ubiquinone as an electron acceptor. Essential for the catalytic activity and assembly of complex I. In Canis lupus familiaris (Dog), this protein is NADH-ubiquinone oxidoreductase chain 6 (MT-ND6).